The primary structure comprises 238 residues: RNA-free ribonuclease P (238 aa).

Belongs to the HARP family.

It catalyses the reaction Endonucleolytic cleavage of RNA, removing 5'-extranucleotides from tRNA precursor.. In terms of biological role, RNA-free RNase P that catalyzes the removal of the 5'-leader sequence from pre-tRNA to produce the mature 5'-terminus. The sequence is that of RNA-free ribonuclease P from Hyperthermus butylicus (strain DSM 5456 / JCM 9403 / PLM1-5).